Consider the following 89-residue polypeptide: Small ribosomal subunit protein uS15 (89 aa).

Residues 1–22 (MPLSKEQKQEVMEKYKLHEHDT) form a disordered region.

Belongs to the universal ribosomal protein uS15 family. Part of the 30S ribosomal subunit. Forms a bridge to the 50S subunit in the 70S ribosome, contacting the 23S rRNA.

In terms of biological role, one of the primary rRNA binding proteins, it binds directly to 16S rRNA where it helps nucleate assembly of the platform of the 30S subunit by binding and bridging several RNA helices of the 16S rRNA. Forms an intersubunit bridge (bridge B4) with the 23S rRNA of the 50S subunit in the ribosome. The polypeptide is Small ribosomal subunit protein uS15 (Natranaerobius thermophilus (strain ATCC BAA-1301 / DSM 18059 / JW/NM-WN-LF)).